A 646-amino-acid chain; its full sequence is Leukotriene A-4 hydrolase homolog (646 aa).

A peptide contacts are provided by residues 172–174 (QCQ) and 307–312 (PYGGME). Residue His336 participates in Zn(2+) binding. Residue Glu337 is the Proton acceptor of the active site. Residues His340 and Glu359 each contribute to the Zn(2+) site. The Proton donor role is filled by Tyr424.

This sequence belongs to the peptidase M1 family. It depends on Zn(2+) as a cofactor.

It is found in the cytoplasm. The protein resides in the nucleus. It catalyses the reaction leukotriene A4 + H2O = leukotriene B4. It functions in the pathway lipid metabolism; leukotriene B4 biosynthesis. Its function is as follows. Aminopeptidase that preferentially cleaves tripeptides. Also has low epoxide hydrolase activity (in vitro). Can hydrolyze an epoxide moiety of LTA(4) to form LTB(4) (in vitro). The sequence is that of Leukotriene A-4 hydrolase homolog from Botryotinia fuckeliana (strain B05.10) (Noble rot fungus).